The sequence spans 577 residues: Proline--tRNA ligase (577 aa).

Belongs to the class-II aminoacyl-tRNA synthetase family. ProS type 1 subfamily. Homodimer.

It localises to the cytoplasm. It carries out the reaction tRNA(Pro) + L-proline + ATP = L-prolyl-tRNA(Pro) + AMP + diphosphate. In terms of biological role, catalyzes the attachment of proline to tRNA(Pro) in a two-step reaction: proline is first activated by ATP to form Pro-AMP and then transferred to the acceptor end of tRNA(Pro). As ProRS can inadvertently accommodate and process non-cognate amino acids such as alanine and cysteine, to avoid such errors it has two additional distinct editing activities against alanine. One activity is designated as 'pretransfer' editing and involves the tRNA(Pro)-independent hydrolysis of activated Ala-AMP. The other activity is designated 'posttransfer' editing and involves deacylation of mischarged Ala-tRNA(Pro). The misacylated Cys-tRNA(Pro) is not edited by ProRS. In Thermotoga sp. (strain RQ2), this protein is Proline--tRNA ligase.